We begin with the raw amino-acid sequence, 432 residues long: Adenylosuccinate synthetase (432 aa).

GTP-binding positions include 13–19 (GDEGKGK) and 41–43 (GHT). Catalysis depends on Asp-14, which acts as the Proton acceptor. Asp-14 and Gly-41 together coordinate Mg(2+). Residues 14–17 (DEGK), 39–42 (NAGH), Thr-130, Arg-144, Gln-225, Thr-240, and Arg-304 each bind IMP. Catalysis depends on His-42, which acts as the Proton donor. Position 300-306 (300-306 (ATTGRRR)) interacts with substrate. GTP is bound by residues Arg-306, 332-334 (KLD), and 414-416 (STG).

It belongs to the adenylosuccinate synthetase family. As to quaternary structure, homodimer. Mg(2+) serves as cofactor.

The protein localises to the cytoplasm. The enzyme catalyses IMP + L-aspartate + GTP = N(6)-(1,2-dicarboxyethyl)-AMP + GDP + phosphate + 2 H(+). It participates in purine metabolism; AMP biosynthesis via de novo pathway; AMP from IMP: step 1/2. Its function is as follows. Plays an important role in the de novo pathway of purine nucleotide biosynthesis. Catalyzes the first committed step in the biosynthesis of AMP from IMP. The protein is Adenylosuccinate synthetase of Methylococcus capsulatus (strain ATCC 33009 / NCIMB 11132 / Bath).